The following is an 82-amino-acid chain: Penaeidin-3h (82 aa).

Positions 1–19 (MRLVVCLVFLASFALVCQG) are cleaved as a signal peptide. Glutamine 20 is subject to Pyrrolidone carboxylic acid. Intrachain disulfides connect cysteine 55–cysteine 73 and cysteine 67–cysteine 74. Serine 81 is modified (serine amide).

This sequence belongs to the penaeidin family.

The protein resides in the cytoplasmic granule. In terms of biological role, antibacterial and antifungal activity. Presents chitin-binding activity. This Penaeus vannamei (Whiteleg shrimp) protein is Penaeidin-3h.